Consider the following 308-residue polypeptide: Probable plastid-lipid-associated protein 9, chloroplastic (308 aa).

Residues 1–55 (MALIQHGSVSGTSAVRLSFSSSVSPPSSSPPLSRVSLNFQSEKKSCYRRMICRAM) constitute a chloroplast transit peptide.

It belongs to the PAP/fibrillin family.

The protein resides in the plastid. Its subcellular location is the chloroplast. The protein localises to the plastoglobule. This chain is Probable plastid-lipid-associated protein 9, chloroplastic (PAP9), found in Arabidopsis thaliana (Mouse-ear cress).